We begin with the raw amino-acid sequence, 255 residues long: SKA complex subunit 1 (255 aa).

Ala2 bears the N-acetylalanine mark. The stretch at 49-91 (INELLNKLELEIQYQEQTNNSLKELCESLEEDYKDIEHLKENV) forms a coiled coil. Residues 92 to 132 (PSHLPQVTVTQSCVKGSDLDPEEPIKVEEPEPVKKPPKEQR) form a flexiple loop that anchors MAPRE1 region. Residues 93 to 96 (SHLP) carry the SXLP motif; mediates interaction with MAPRE1, targeting to microtubule plus ends, stabilization on kinetochores and is required for proper chromosome alignment to the metaphase plate motif. Residues 106–131 (KGSDLDPEEPIKVEEPEPVKKPPKEQ) form a disordered region. Positions 114-131 (EPIKVEEPEPVKKPPKEQ) are enriched in basic and acidic residues. The tract at residues 132–255 (RSIKEMPFIT…GGGLTRYVIT (124 aa)) is binds microtubules and protein phosphatase PP1 subunit PPP1CA. At Thr157 the chain carries Phosphothreonine; by AURKB. The residue at position 242 (Ser242) is a Phosphoserine; by AURKB.

The protein belongs to the SKA1 family. Component of the SKA complex, composed of SKA1, SKA2 and SKA3. The SKA complex is a homodimer organized around a central W-shaped coiled-coil structure, formed by the interacting domains of SKA1, SKA2, and SKA3, each end of the 'W' is extended further by the C-terminal microtubule-binding domains of SKA1 and SKA3; the complex forms extended structures on microtubules. Interacts (via SXLP motif) with MAPRE1 (via C-terminus); the interaction is direct and stabilizes the kinetochore-microtubule attachment of the SKA1 complex. Interacts (via C-terminus) with protein phosphatase PP1 subunit PPP1CA; the interaction is direct and required for recruitment of PPP1CA to the kinetochore. Interacts with the NDC80 complex; the interaction is required to establish kinetochore-microtubule end-on attachments. Post-translationally, phosphorylated by AURKB at Thr-157 and Ser-242 which negatively regulates the association of the SKA complex with kinetochores to allow correction of aberrant kinetochore-microtubule interactions and promote mitotic sister chromatid biorientation.

It is found in the cytoplasm. The protein localises to the cytoskeleton. Its subcellular location is the spindle. The protein resides in the chromosome. It localises to the centromere. It is found in the kinetochore. The protein localises to the microtubule organizing center. Its subcellular location is the centrosome. Component of the SKA complex, a microtubule plus end-binding complex of the outer kinetochore that stabilizes spindle microtubule-kinetochore attachments, promotes alignment of chromosomes at the mitotic spindle equator (chromosome congression) and assists suppression of the spindle assembly checkpoint. Kinetochores, consisting of a centromere-associated inner segment and a microtubule-contacting outer segment, play a crucial role in chromosome segregation by mediating the physical connection between centromeric DNA and spindle microtubules. The outer kinetochore is made up of the ten-subunit KMN network complex, comprising the MIS12, NDC80 and KNL1 complexes, and auxiliary microtubule-associated components such as the SKA complex; together they connect the outer kinetochore with the inner kinetochore, bind microtubules, and mediate interactions with mitotic checkpoint proteins that delay anaphase until chromosomes are bioriented on the spindle. The SKA complex is loaded onto bioriented kinetochores and it facilitates chromosome congression by stabilizing microtubules together with MAPRE1, and end-on attachment of the NDC80 complex to depolymerizing spindle microtubules, thereby assisting the poleward-moving kinetochore in withstanding microtubule pulling forces. The complex associates with dynamic microtubule plus-ends and can track both depolymerizing and elongating microtubules. The complex recruits protein phosphatase 1 (PP1) to the kinetochore in prometaphase and metaphase, to oppose spindle assembly checkpoint signaling and promote the onset of anaphase. In the complex, it mediates interactions with microtubules. It also stimulates AURKB/Aurora B catalytic activity. During meiosis the SKA complex stabilizes the meiotic spindle and is required for its migration to the cortex. The chain is SKA complex subunit 1 (SKA1) from Homo sapiens (Human).